A 43-amino-acid polypeptide reads, in one-letter code: Plasma membrane ATPase proteolipid 2 (43 aa).

Positions 1 to 5 are excised as a propeptide; that stretch reads MLMST. A helical membrane pass occupies residues 9 to 29; the sequence is GVILVFILVGLACIAIISTII. At 30-43 the chain is on the cytoplasmic side; the sequence is YRKWQARQRGLQRF.

As to quaternary structure, monomer and homodimer. Associated with the 100 kDa subunit of the plasma membrane H(+)-ATPase.

The protein resides in the cell membrane. The sequence is that of Plasma membrane ATPase proteolipid 2 (PMP2) from Saccharomyces cerevisiae (strain ATCC 204508 / S288c) (Baker's yeast).